A 419-amino-acid polypeptide reads, in one-letter code: Tyrosine--tRNA ligase 2 (419 aa).

Y34 provides a ligand contact to L-tyrosine. A 'HIGH' region motif is present at residues 39–48 (PTGDSMHIGH). L-tyrosine-binding residues include Y168 and Q172. Positions 230 to 234 (KFGKS) match the 'KMSKS' region motif. K233 lines the ATP pocket. Residues 352-418 (KNIVEWLVDL…GKKNYSLVKL (67 aa)) enclose the S4 RNA-binding domain.

It belongs to the class-I aminoacyl-tRNA synthetase family. TyrS type 1 subfamily. As to quaternary structure, homodimer.

Its subcellular location is the cytoplasm. The catalysed reaction is tRNA(Tyr) + L-tyrosine + ATP = L-tyrosyl-tRNA(Tyr) + AMP + diphosphate + H(+). Catalyzes the attachment of tyrosine to tRNA(Tyr) in a two-step reaction: tyrosine is first activated by ATP to form Tyr-AMP and then transferred to the acceptor end of tRNA(Tyr). The chain is Tyrosine--tRNA ligase 2 from Bacillus cereus (strain ATCC 10987 / NRS 248).